The chain runs to 693 residues: Elongation factor G (693 aa).

Positions 8 to 282 (EKFRNFGIMA…AVVDYLPSPI (275 aa)) constitute a tr-type G domain. GTP-binding positions include 17–24 (AHIDAGKT), 81–85 (DTPGH), and 135–138 (NKMD).

The protein belongs to the TRAFAC class translation factor GTPase superfamily. Classic translation factor GTPase family. EF-G/EF-2 subfamily.

It is found in the cytoplasm. In terms of biological role, catalyzes the GTP-dependent ribosomal translocation step during translation elongation. During this step, the ribosome changes from the pre-translocational (PRE) to the post-translocational (POST) state as the newly formed A-site-bound peptidyl-tRNA and P-site-bound deacylated tRNA move to the P and E sites, respectively. Catalyzes the coordinated movement of the two tRNA molecules, the mRNA and conformational changes in the ribosome. In Mycoplasmoides gallisepticum (strain R(low / passage 15 / clone 2)) (Mycoplasma gallisepticum), this protein is Elongation factor G.